Reading from the N-terminus, the 183-residue chain is NEDD8-conjugating enzyme Ubc12 (183 aa).

M1 bears the N-acetylmethionine mark. The disordered stretch occupies residues 1–29; it reads MIKLFSLKQQKKEEESAGGTKGSSKKASA. The interval 1–57 is interaction with UBA3; the sequence is MIKLFSLKQQKKEEESAGGTKGSSKKASAAQLRIQKDINELNLPKTCDISFSDPDDL. K3 carries the post-translational modification N6-acetyllysine. The region spanning 29 to 173 is the UBC core domain; the sequence is AAQLRIQKDI…VQRSMRGGYI (145 aa). S50 is subject to Phosphoserine. The Glycyl thioester intermediate role is filled by C111. Asymmetric dimethylarginine; alternate is present on R169. R169 carries the post-translational modification Omega-N-methylarginine; alternate.

The protein belongs to the ubiquitin-conjugating enzyme family. UBC12 subfamily. Interacts with UBA3 and RBX1. Interacts (N-terminally acetylated form) with (via DCUN1 domain) DCUN1D1, DCUN1D2, DCUN1D3, DCUN1D4 and DCUN1D5. In terms of processing, the acetylation of Met-1 increases affinity for DCUN1D1 by about 2 orders of magnitude and is crucial for NEDD8 transfer to cullins.

It catalyses the reaction [E1 NEDD8-activating enzyme]-S-[NEDD8 protein]-yl-L-cysteine + [E2 NEDD8-conjugating enzyme]-L-cysteine = [E1 NEDD8-activating enzyme]-L-cysteine + [E2 NEDD8-conjugating enzyme]-S-[NEDD8-protein]-yl-L-cysteine.. Its pathway is protein modification; protein neddylation. In terms of biological role, accepts the ubiquitin-like protein NEDD8 from the UBA3-NAE1 E1 complex and catalyzes its covalent attachment to other proteins. The specific interaction with the E3 ubiquitin ligase RBX1, but not RBX2, suggests that the RBX1-UBE2M complex neddylates specific target proteins, such as CUL1, CUL2, CUL3 and CUL4. Involved in cell proliferation. The polypeptide is NEDD8-conjugating enzyme Ubc12 (Ube2m) (Mus musculus (Mouse)).